We begin with the raw amino-acid sequence, 237 residues long: ADTIVAVELDTYPNTDIGDPSYPHIGIDIKSVRSKKTAKWNMQNGKVGTAHIIYNSVGKRLSAVVSYPNGDSATVSYDVDLDNVLPEWVRVGLSASTGLYKETNTILSWSFTSKLKSNSTHETNALHFVFNQFSKDQKDLILQGDATTGTDGNLELTRVSSNGSPQGNSVGRALFYAPVHIWESSAVVASFDATFTFLIKSSDSHPADGIAFFISNIDSSIPSGSTGRLLGLFPDAN.

Mn(2+)-binding residues include Glu-8 and Asp-10. Ca(2+) contacts are provided by Asp-10, Tyr-12, Asn-14, and Asp-19. Tyr-12 is a binding site for a carbohydrate. Residues Asp-19 and His-24 each contribute to the Mn(2+) site. 99–100 (LY) provides a ligand contact to a carbohydrate. Asp-208 is a Ca(2+) binding site. Arg-228 is a binding site for a carbohydrate.

Belongs to the leguminous lectin family. Homotetramer.

Glucose/D-mannose specific lectin. The sequence is that of Concanavalin-A from Canavalia lineata (Beach bean).